Consider the following 125-residue polypeptide: Small ribosomal subunit protein uS12 (125 aa).

Asp89 bears the 3-methylthioaspartic acid mark.

It belongs to the universal ribosomal protein uS12 family. In terms of assembly, part of the 30S ribosomal subunit. Contacts proteins S8 and S17. May interact with IF1 in the 30S initiation complex.

Functionally, with S4 and S5 plays an important role in translational accuracy. Its function is as follows. Interacts with and stabilizes bases of the 16S rRNA that are involved in tRNA selection in the A site and with the mRNA backbone. Located at the interface of the 30S and 50S subunits, it traverses the body of the 30S subunit contacting proteins on the other side and probably holding the rRNA structure together. The combined cluster of proteins S8, S12 and S17 appears to hold together the shoulder and platform of the 30S subunit. This is Small ribosomal subunit protein uS12 from Ralstonia nicotianae (strain ATCC BAA-1114 / GMI1000) (Ralstonia solanacearum).